A 365-amino-acid chain; its full sequence is Histidinol-phosphate aminotransferase (365 aa).

Residues 1–21 form a disordered region; it reads MSRPVPNPGILDIAPYTPGKS. Lys-221 is modified (N6-(pyridoxal phosphate)lysine).

This sequence belongs to the class-II pyridoxal-phosphate-dependent aminotransferase family. Histidinol-phosphate aminotransferase subfamily. In terms of assembly, homodimer. The cofactor is pyridoxal 5'-phosphate.

The catalysed reaction is L-histidinol phosphate + 2-oxoglutarate = 3-(imidazol-4-yl)-2-oxopropyl phosphate + L-glutamate. It participates in amino-acid biosynthesis; L-histidine biosynthesis; L-histidine from 5-phospho-alpha-D-ribose 1-diphosphate: step 7/9. This chain is Histidinol-phosphate aminotransferase, found in Rhodopseudomonas palustris (strain ATCC BAA-98 / CGA009).